Here is a 137-residue protein sequence, read N- to C-terminus: Large ribosomal subunit protein uL16 (137 aa).

Residues 1-14 (MLQPNRRKFRKEHK) show a composition bias toward basic residues. The interval 1–22 (MLQPNRRKFRKEHKGRNEGLAT) is disordered.

Belongs to the universal ribosomal protein uL16 family. As to quaternary structure, part of the 50S ribosomal subunit.

In terms of biological role, binds 23S rRNA and is also seen to make contacts with the A and possibly P site tRNAs. This is Large ribosomal subunit protein uL16 from Dechloromonas aromatica (strain RCB).